The primary structure comprises 945 residues: MSTPSIPQFTSSFSPFSSGSHSTGMAPSQTVGLDTLAEGSQYVLEQLQLSRDAAGTGAGDGATSTSLRNSMSHTKDQPPFDNEKNQSTGSGFRDALQRDPLVEARSAVRKTSSSAPVRRRISRACDQCNQLRTKCDGQHPCAHCIEFGLTCEYARERKKRGKASKKDLAAAAAAATQGSNGHSGQANASLMGERTSEDSRPGQDVNGTYDSAFESHHLSSQPSHMQHASTAGISGLHESQTAPSHSQSSLGTTIDAMHLNHFNTMNDSGRPAMSISDLRSLPPSVLPPQGLSSGYNASAFALVNPQEPGSPANQFRLGSSAENPTAPFLGLSPPGQSPGWLPLPSPSPANFPSFSLHPFSSTLRYPVLQPVLPHIASIIPQSLACDLLDVYFTSSSSSHLSPLSPYVVGYIFRKQSFLHPTKPRICSPGLLASMLWVAAQTSEAAFLTSPPSARGRVCQKLLELTIGLLRPLVHGPATGEASPNYAANMVINGVALGGFGVSMDQLGAQSSATGAVDDVATYVHLATVVSASEYKAASMRWWTAAWSLARELKLGRELPPNVSHARQDGERDGDGEADKRHPPTLITSLGHGSGSSGINVTEEEREERRRLWWLLYATDRHLALCYNRPLTLLDKECGGLLQPMNDDLWQVGDFAAAAYRQVGPPVECTGHSMYGYFLPLMTILGGIVDLHHAENHPRFGLAFRNSPEWERQVLDVTRQLDTYGRSLKEFEARYTSNLTLGATDNEPVVEGAHLDHTSPSGRSSSTVGSRVSESIVHTRMVVAYGTHIMHVLHILLAGKWDPVNLLEDHDLWISSESFVSAMSHAVGAAEAAAEILEYDPDLSFMPFFFGIYLLQGSFLLLLAADKLQGDASPSVVRACETIVRAHEACVVTLNTEYQRTFRKVMRSALAQVRGRIPEDFGEQQQRRREVLALYRWSGDGSGLAL.

The span at 1 to 23 shows a compositional bias: low complexity; sequence MSTPSIPQFTSSFSPFSSGSHST. Disordered stretches follow at residues 1–32 and 53–118; these read MSTP…QTVG and AAGT…APVR. A compositionally biased stretch (basic and acidic residues) spans 73-84; sequence HTKDQPPFDNEK. Residues 125–151 constitute a DNA-binding region (zn(2)-C6 fungal-type); sequence CDQCNQLRTKCDGQHPCAHCIEFGLTC. Disordered stretches follow at residues 172–210 and 559–601; these read AAAA…GTYD and PPNV…INVT. The segment covering 176–188 has biased composition (polar residues); sequence TQGSNGHSGQANA. The segment covering 565 to 581 has biased composition (basic and acidic residues); the sequence is ARQDGERDGDGEADKRH.

It belongs to the xlnR/xlr1 family.

Its subcellular location is the nucleus. Transcriptional activator of the xylanolytic system. Involved in the regulation of extracellular cellulolytic and xylanolytic genes and in the regulation of the intracellular activities of D-xylose catabolic genes in the pentose catabolic pathway (PCP) in response to the presence of D-xylose. Binds to the DNA sequence 5'-GGNTAAA-3'. The chain is Xylanolytic transcriptional activator xlnR (xlnR) from Aspergillus niger.